The sequence spans 367 residues: Phosphoribosylaminoimidazole-succinocarboxamide synthase (367 aa).

This sequence belongs to the SAICAR synthetase family.

The catalysed reaction is 5-amino-1-(5-phospho-D-ribosyl)imidazole-4-carboxylate + L-aspartate + ATP = (2S)-2-[5-amino-1-(5-phospho-beta-D-ribosyl)imidazole-4-carboxamido]succinate + ADP + phosphate + 2 H(+). Its pathway is purine metabolism; IMP biosynthesis via de novo pathway; 5-amino-1-(5-phospho-D-ribosyl)imidazole-4-carboxamide from 5-amino-1-(5-phospho-D-ribosyl)imidazole-4-carboxylate: step 1/2. The sequence is that of Phosphoribosylaminoimidazole-succinocarboxamide synthase from Shewanella sp. (strain W3-18-1).